The sequence spans 440 residues: MFLAQEIIRKKRDGHALSDEEIRFFINGIRDNTISEGQIAALAMTIFFHDMTMPERVSLTMAMRDSGTVLDWKSLHLNGPIVDKHSTGGVGDVTSLMLGPMVAACGGYIPMISGRGLGHTGGTLDKLESIPGFDIFPDDNRFREIIKDVGVAIIGQTSSLAPADKRFYATRDITATVDSIPLITASILAKKLAEGLDALVMDVKVGSGAFMPTYELSEALAEAIVGVANGAGVRTTALLTDMNQVLASSAGNAVEVREAVQFLTGEYRNPRLFDVTMALCVEMLISSKLAKDDAEARAKLQAVLDNGKAAEVFGRMVAAQKGPTDFVENYAKYLPTAMLTKAVYADTEGFVSEMDTRALGMAVVAMGGGRRQASDTIDYSVGFTDMARLGDQVDGQRPLAVIHAKDENSWQEAAKAVKAAIKLADKAPESTPTVYRRISE.

This sequence belongs to the thymidine/pyrimidine-nucleoside phosphorylase family. Homodimer.

The catalysed reaction is thymidine + phosphate = 2-deoxy-alpha-D-ribose 1-phosphate + thymine. Its pathway is pyrimidine metabolism; dTMP biosynthesis via salvage pathway; dTMP from thymine: step 1/2. The enzymes which catalyze the reversible phosphorolysis of pyrimidine nucleosides are involved in the degradation of these compounds and in their utilization as carbon and energy sources, or in the rescue of pyrimidine bases for nucleotide synthesis. The protein is Thymidine phosphorylase of Escherichia coli O127:H6 (strain E2348/69 / EPEC).